Reading from the N-terminus, the 255-residue chain is Tryptophan synthase alpha chain (255 aa).

Catalysis depends on proton acceptor residues glutamate 51 and aspartate 62.

This sequence belongs to the TrpA family. Tetramer of two alpha and two beta chains.

The enzyme catalyses (1S,2R)-1-C-(indol-3-yl)glycerol 3-phosphate + L-serine = D-glyceraldehyde 3-phosphate + L-tryptophan + H2O. It functions in the pathway amino-acid biosynthesis; L-tryptophan biosynthesis; L-tryptophan from chorismate: step 5/5. In terms of biological role, the alpha subunit is responsible for the aldol cleavage of indoleglycerol phosphate to indole and glyceraldehyde 3-phosphate. The sequence is that of Tryptophan synthase alpha chain from Maridesulfovibrio salexigens (strain ATCC 14822 / DSM 2638 / NCIMB 8403 / VKM B-1763) (Desulfovibrio salexigens).